Here is a 622-residue protein sequence, read N- to C-terminus: Pyranose 2-oxidase (622 aa).

The first 28 residues, 1-28 (MSASSSDPFHSFAKTSFTSKAAKRATAH), serve as a signal peptide directing secretion. The propeptide occupies 29–37 (SLPPLPGPG). A Tele-8alpha-FAD histidine modification is found at His167. 2 residues coordinate substrate: Gln449 and His451. His546 (proton acceptor) is an active-site residue. The active site involves Asn591.

This sequence belongs to the GMC oxidoreductase family. As to quaternary structure, homotetramer. Requires FAD as cofactor. In terms of processing, not glycosylated.

The protein resides in the periplasm. The enzyme catalyses D-glucose + O2 = 2-dehydro-D-glucose + H2O2. Its function is as follows. Catalyzes the oxidation of various aldopyranoses and disaccharides on carbon-2 to the corresponding 2-keto sugars concomitant with the reduction of O(2) to H(2)O(2). Plays an important role in lignin degradation of wood rot fungi by supplying the essential cosubstrate H(2)O(2) for the ligninolytic peroxidases, lignin peroxidase and manganese-dependent peroxidase. The preferred substrate is D-glucose which is converted to 2-dehydro-D-glucose, an intermediate of a secondary metabolic pathway leading to the antibiotic cortalcerone. Also acts on D-xylose, together with D-glucose the major sugars derived from wood, on L-sorbose, D-galactose and 1,5-anhydroglucitol, a diagnostic marker of diabetes mellitus. The protein is Pyranose 2-oxidase (p2ox) of Phlebiopsis gigantea (White-rot fungus).